Reading from the N-terminus, the 520-residue chain is Maturase K (520 aa).

It belongs to the intron maturase 2 family. MatK subfamily.

The protein resides in the plastid. It localises to the chloroplast. Functionally, usually encoded in the trnK tRNA gene intron. Probably assists in splicing its own and other chloroplast group II introns. This is Maturase K from Maianthemum dilatatum (False lily-of-the-valley).